Consider the following 416-residue polypeptide: Gap junction alpha-3 protein (416 aa).

The stretch at 2–15 (GDWSFLGRLLENAQ) is an intramembrane region. Over 16-19 (EHST) the chain is Cytoplasmic. Residues 20–40 (VIGKVWLTVLFIFRILVLGAA) form a helical membrane-spanning segment. At 41–71 (AEEVWGDEQSDFTCNTQQPGCENVCYDRAFP) the chain is on the extracellular side. Cystine bridges form between Cys54/Cys198, Cys61/Cys192, and Cys65/Cys187. Residues 72-92 (ISHIRFWALQIIFVSTPTLIY) traverse the membrane as a helical segment. The Cytoplasmic segment spans residues 93–158 (LGHVLHIVRM…GALLRTYVFN (66 aa)). A compositionally biased stretch (basic and acidic residues) spans 110–128 (EEELLRRDNPQHGRGREPM). The disordered stretch occupies residues 110–141 (EEELLRRDNPQHGRGREPMRTGSPRDPPLRDD). The chain crosses the membrane as a helical span at residues 159–179 (IIFKTLFEVGFIAGQYFLYGF). Residues 180 to 207 (QLQPLYRCDRWPCPNTVDCFISRPTEKT) are Extracellular-facing. Residues 208–228 (IFVIFMLAVACASLVLNMLEI) traverse the membrane as a helical segment. Residues 229 to 416 (YHLGWKKLKQ…GRARPGDLAI (188 aa)) are Cytoplasmic-facing. Residues 336–416 (GAEPQTPASK…GRARPGDLAI (81 aa)) are disordered. Low complexity predominate over residues 342 to 353 (PASKPSSAASSP).

Belongs to the connexin family. Alpha-type (group II) subfamily. As to quaternary structure, a hemichannel or connexon is composed of a hexamer of connexins. A functional gap junction is formed by the apposition of two hemichannels. Forms heteromeric channels with GJA8. As to expression, detected in eye lens (at protein level). Most abundant in lens, but also present in heart and kidney.

It is found in the cell membrane. The protein localises to the cell junction. Its subcellular location is the gap junction. In terms of biological role, structural component of lens fiber gap junctions. Gap junctions are dodecameric channels that connect the cytoplasm of adjoining cells. They are formed by the docking of two hexameric hemichannels, one from each cell membrane. Small molecules and ions diffuse from one cell to a neighboring cell via the central pore. The protein is Gap junction alpha-3 protein (Gja3) of Rattus norvegicus (Rat).